Here is a 628-residue protein sequence, read N- to C-terminus: Netrin-4 (628 aa).

The first 18 residues, Met-1–Ala-18, serve as a signal peptide directing secretion. Positions Cys-30–Ser-261 constitute a Laminin N-terminal domain. N-linked (GlcNAc...) asparagine glycosylation is found at Asn-56 and Asn-163. Disulfide bonds link Cys-262-Cys-271, Cys-264-Cys-293, Cys-295-Cys-304, Cys-307-Cys-329, Cys-332-Cys-341, Cys-334-Cys-359, Cys-362-Cys-371, Cys-374-Cys-392, Cys-395-Cys-413, Cys-397-Cys-420, Cys-422-Cys-431, and Cys-434-Cys-446. 3 Laminin EGF-like domains span residues Cys-262–Thr-331, Cys-332–Pro-394, and Cys-395–Pro-448. Asn-353 carries N-linked (GlcNAc...) asparagine glycosylation. A glycan (N-linked (GlcNAc...) asparagine) is linked at Asn-483. 2 disulfide bridges follow: Cys-506/Cys-576 and Cys-520/Cys-627. The NTR domain occupies Cys-506 to Cys-627.

As to quaternary structure, may form a homodimer. In terms of tissue distribution, expressed in kidney, spleen, mammary gland, aorta, heart, ovary, prostate and fetal spleen.

Its subcellular location is the secreted. It is found in the extracellular space. The protein resides in the extracellular matrix. It localises to the basement membrane. Its function is as follows. May play an important role in neural, kidney and vascular development. Promotes neurite elongation from olfactory bulb explants. In Homo sapiens (Human), this protein is Netrin-4 (NTN4).